We begin with the raw amino-acid sequence, 378 residues long: Glutamate 5-kinase (378 aa).

Residue Lys-20 coordinates ATP. Substrate contacts are provided by Ser-60, Asp-147, and Asn-159. Residues 179-180 and 221-227 each bind ATP; these read TD and TGGMATK. Residues 286 to 364 form the PUA domain; sequence AGDIVIDAGA…QEIYKVLGYE (79 aa).

The protein belongs to the glutamate 5-kinase family.

The protein localises to the cytoplasm. It catalyses the reaction L-glutamate + ATP = L-glutamyl 5-phosphate + ADP. It participates in amino-acid biosynthesis; L-proline biosynthesis; L-glutamate 5-semialdehyde from L-glutamate: step 1/2. In terms of biological role, catalyzes the transfer of a phosphate group to glutamate to form L-glutamate 5-phosphate. The chain is Glutamate 5-kinase from Photobacterium profundum (strain SS9).